Here is a 140-residue protein sequence, read N- to C-terminus: Nucleoside diphosphate kinase (140 aa).

Positions 11, 59, 87, 93, 104, and 114 each coordinate ATP. Residue histidine 117 is the Pros-phosphohistidine intermediate of the active site.

This sequence belongs to the NDK family. As to quaternary structure, homotetramer. Mg(2+) is required as a cofactor.

The protein localises to the cytoplasm. It catalyses the reaction a 2'-deoxyribonucleoside 5'-diphosphate + ATP = a 2'-deoxyribonucleoside 5'-triphosphate + ADP. The enzyme catalyses a ribonucleoside 5'-diphosphate + ATP = a ribonucleoside 5'-triphosphate + ADP. Its function is as follows. Major role in the synthesis of nucleoside triphosphates other than ATP. The ATP gamma phosphate is transferred to the NDP beta phosphate via a ping-pong mechanism, using a phosphorylated active-site intermediate. The polypeptide is Nucleoside diphosphate kinase (Ruegeria sp. (strain TM1040) (Silicibacter sp.)).